We begin with the raw amino-acid sequence, 452 residues long: UPF0210 protein Csac_1314 (452 aa).

Belongs to the UPF0210 family. Homodimer.

This Caldicellulosiruptor saccharolyticus (strain ATCC 43494 / DSM 8903 / Tp8T 6331) protein is UPF0210 protein Csac_1314.